A 546-amino-acid chain; its full sequence is NRAMP-like transporter smf-2 (546 aa).

Residues 1–42 are Cytoplasmic-facing; that stretch reads MPGFQNANISDLAPPAREKTFDDTIAVKIPEDEKNTWFSWRK. A helical membrane pass occupies residues 43 to 63; that stretch reads LWAFTGPGFLMSIAYLDPGNI. Topologically, residues 64 to 70 are extracellular; the sequence is ESDLQAG. Residues 71–91 form a helical membrane-spanning segment; that stretch reads AQAEYKLLWVLLVSHIVGMLL. At 92 to 119 the chain is on the cytoplasmic side; it reads QRMSARLGVVSGKHMAEIAYDYYPLVPR. A helical membrane pass occupies residues 120–140; that stretch reads IILWLMIEIAIVCSDMQEVIG. Residues 141–152 lie on the Extracellular side of the membrane; the sequence is TAIAIYLLSSGK. The helical transmembrane segment at 153 to 173 threads the bilayer; that stretch reads IPLLVGVLITILDTFTFLFID. The Cytoplasmic portion of the chain corresponds to 174–181; that stretch reads RYGIRKLE. Residues 182–202 form a helical membrane-spanning segment; sequence FIFVALISTMAISFGYEFVVM. Residues 203-228 lie on the Extracellular side of the membrane; sequence KPVLTKVLTGTVVPWCSGCGKEEIIT. The chain crosses the membrane as a helical span at residues 229–249; the sequence is AISIFGAVIMPHNFYLHSALV. Topologically, residues 250 to 270 are cytoplasmic; that stretch reads KSRKVDRSSKTRIAEANKYFS. The helical transmembrane segment at 271–291 threads the bilayer; it reads IESAFALSVSFFINLFVLSVF. Residues 292–334 are Extracellular-facing; that stretch reads ARGLYQKTNGDVNSMCLSHNDIPDSNVFPNNTSSVTVDLFQGG. Asn321 carries an N-linked (GlcNAc...) asparagine glycan. Residues 335-355 form a helical membrane-spanning segment; sequence IYLGCQFGLFAMIIWAIGIFA. Over 356–386 the chain is Cytoplasmic; that stretch reads AGQSSTMTGTYTGQFVMEGFVRISWPKWKRV. The helical transmembrane segment at 387 to 407 threads the bilayer; it reads LITRAVAITPTLILCIKAHGI. Residues 408 to 415 lie on the Extracellular side of the membrane; that stretch reads KNLTGMND. The N-linked (GlcNAc...) asparagine glycan is linked to Asn409. The chain crosses the membrane as a helical span at residues 416–436; sequence FLNCVQMVQLPFALIPMITFT. Topologically, residues 437–453 are cytoplasmic; that stretch reads SSKRIMHNFRTSKPLQY. The chain crosses the membrane as a helical span at residues 454-474; it reads FSIICGIITIGINVYFIFQYV. The Extracellular segment spans residues 475–483; it reads TENFGTGWL. The chain crosses the membrane as a helical span at residues 484-504; it reads IFVIIGPFTLLYIAFILYLAI. The Cytoplasmic segment spans residues 505–546; sequence YCLVACELMNDTVNLPGFDFHRTLELDAPWITETFVVNDVYF.

Belongs to the NRAMP family. In terms of tissue distribution, expressed in dopaminergic neurons (at protein level). Primarily expressed in mc1, mc2 and mc3 epithelial cells of the pharynx and vpil-6 pharyngeal-intestinal valve cells displaying an anterior-posterior expression gradient. Expressed in gonad sheath cells.

It localises to the apical cell membrane. Its subcellular location is the cytoplasmic vesicle membrane. In terms of biological role, probable divalent metal ion transporter which regulates Mn(2+) uptake. This is NRAMP-like transporter smf-2 from Caenorhabditis elegans.